A 198-amino-acid chain; its full sequence is Recombination protein RecR (198 aa).

The segment at 59–74 adopts a C4-type zinc-finger fold; sequence CSLCCNYTDHDPCPIC. Residues 82–175 form the Toprim domain; it reads TLLCIVEQPR…KVTRIAHGLP (94 aa).

The protein belongs to the RecR family.

May play a role in DNA repair. It seems to be involved in an RecBC-independent recombinational process of DNA repair. It may act with RecF and RecO. The chain is Recombination protein RecR from Desulfitobacterium hafniense (strain Y51).